An 87-amino-acid chain; its full sequence is Small ribosomal subunit protein bS18 (87 aa).

Belongs to the bacterial ribosomal protein bS18 family. In terms of assembly, part of the 30S ribosomal subunit. Forms a tight heterodimer with protein bS6.

Its function is as follows. Binds as a heterodimer with protein bS6 to the central domain of the 16S rRNA, where it helps stabilize the platform of the 30S subunit. In Sulfurovum sp. (strain NBC37-1), this protein is Small ribosomal subunit protein bS18.